Here is an 81-residue protein sequence, read N- to C-terminus: ATP synthase subunit c (81 aa).

Transmembrane regions (helical) follow at residues 5-25 (VAAA…IGPG) and 57-77 (LAFM…LLFA).

Belongs to the ATPase C chain family. F-type ATPases have 2 components, F(1) - the catalytic core - and F(0) - the membrane proton channel. F(1) has five subunits: alpha(3), beta(3), gamma(1), delta(1), epsilon(1). F(0) has four main subunits: a(1), b(1), b'(1) and c(10-14). The alpha and beta chains form an alternating ring which encloses part of the gamma chain. F(1) is attached to F(0) by a central stalk formed by the gamma and epsilon chains, while a peripheral stalk is formed by the delta, b and b' chains.

It localises to the cellular thylakoid membrane. Its function is as follows. F(1)F(0) ATP synthase produces ATP from ADP in the presence of a proton or sodium gradient. F-type ATPases consist of two structural domains, F(1) containing the extramembraneous catalytic core and F(0) containing the membrane proton channel, linked together by a central stalk and a peripheral stalk. During catalysis, ATP synthesis in the catalytic domain of F(1) is coupled via a rotary mechanism of the central stalk subunits to proton translocation. Functionally, key component of the F(0) channel; it plays a direct role in translocation across the membrane. A homomeric c-ring of between 10-14 subunits forms the central stalk rotor element with the F(1) delta and epsilon subunits. The protein is ATP synthase subunit c of Microcystis aeruginosa (strain NIES-843 / IAM M-2473).